The sequence spans 819 residues: Leucine--tRNA ligase (819 aa).

The 'HIGH' region signature appears at 40–51 (PYPSGAGLHVGH). Positions 600–604 (KMSKS) match the 'KMSKS' region motif. Residue K603 participates in ATP binding.

This sequence belongs to the class-I aminoacyl-tRNA synthetase family.

Its subcellular location is the cytoplasm. The enzyme catalyses tRNA(Leu) + L-leucine + ATP = L-leucyl-tRNA(Leu) + AMP + diphosphate. The chain is Leucine--tRNA ligase from Chlamydia trachomatis serovar A (strain ATCC VR-571B / DSM 19440 / HAR-13).